The primary structure comprises 262 residues: 3-methyl-2-oxobutanoate hydroxymethyltransferase (262 aa).

Mg(2+) is bound by residues D44 and D83. 3-methyl-2-oxobutanoate is bound by residues D44–S45, D83, and K112. A Mg(2+)-binding site is contributed by E114. E177 (proton acceptor) is an active-site residue.

This sequence belongs to the PanB family. In terms of assembly, homodecamer; pentamer of dimers. It depends on Mg(2+) as a cofactor.

It localises to the cytoplasm. It catalyses the reaction 3-methyl-2-oxobutanoate + (6R)-5,10-methylene-5,6,7,8-tetrahydrofolate + H2O = 2-dehydropantoate + (6S)-5,6,7,8-tetrahydrofolate. Its pathway is cofactor biosynthesis; coenzyme A biosynthesis. In terms of biological role, catalyzes the reversible reaction in which hydroxymethyl group from 5,10-methylenetetrahydrofolate is transferred onto alpha-ketoisovalerate to form ketopantoate. The protein is 3-methyl-2-oxobutanoate hydroxymethyltransferase of Metallosphaera sedula (strain ATCC 51363 / DSM 5348 / JCM 9185 / NBRC 15509 / TH2).